Consider the following 275-residue polypeptide: MVVKIGIIKSGNIGTSPVLDLLLDERADRPNIDVRVFGSGAKMNPEQVEDVVPKVDQFDPDFCIFISPNPGAPGPAKARELLSEKDIPAIIIGDAPGKGKKDEMDEQGLGYIIVMSDPMIGAKREWLDPTEMAIFNADILKVLAETGALRLVQNTIDGVIDGAAAGNIELPKLIITAEKAVEAAGFENPYAKAKAIAAYEMAGAVANLDMKGCFMTKGFENFIPLVAAAHEMAASAAALADEAREIEKGNDSVLRTPHMKEGNTGCKTDLISKPE.

It belongs to the MTD family.

The catalysed reaction is 5,10-methylenetetrahydromethanopterin + oxidized coenzyme F420-(gamma-L-Glu)(n) + 2 H(+) = 5,10-methenyl-5,6,7,8-tetrahydromethanopterin + reduced coenzyme F420-(gamma-L-Glu)(n). The protein operates within one-carbon metabolism; methanogenesis from CO(2); 5,10-methylene-5,6,7,8-tetrahydromethanopterin from 5,10-methenyl-5,6,7,8-tetrahydromethanopterin (coenzyme F420 route): step 1/1. In terms of biological role, catalyzes the reversible reduction of methenyl-H(4)MPT(+) to methylene-H(4)MPT. This chain is F420-dependent methylenetetrahydromethanopterin dehydrogenase, found in Methanobrevibacter smithii (strain ATCC 35061 / DSM 861 / OCM 144 / PS).